We begin with the raw amino-acid sequence, 392 residues long: MKASVIIPAYNSKERLYNSLLSLNQQECDEEFEVIVADNGSEDGTLSMLESFQADFPLIFTRIKENRGIAYGRNQALRNARGDILIFHDSDMLAAKDLVAKHIKAHENEENLVVCGLFWKRIYSFYYERFEEEHKEQLAKLTGEMPKKDKQKLLEEADIKNGSFLDKSFDLDTDFIDVLKKILDEYGDDLKGYHMPWRFFITNNSSVKRKHVVDLGLFDEGIVRYGFEDYDLGIRLHQAGLTFRLRRDIVSVHQEHPSNCKSVDDIRANIAYMCDKYNNIRSLDVHLAFNGPFPPDMTNRIMADIQKLLESQKYDMLLNLFLELLHVVKERNIDPDWRKKSPRVTAKSFDLQTVRKLLPKAKKKLGVNDFANALYALVNDLLHVDLRSLDVV.

It belongs to the glycosyltransferase 2 family.

This is an uncharacterized protein from Bacillus subtilis (strain 168).